Here is a 543-residue protein sequence, read N- to C-terminus: MKRVKKLWGMGLALGLSFALMGCTANEQAGKEGSHDKAKTSGEKVLYVNNENEPTSFDPPIGFNNVSWQPLNNIMEGLTRLGKDHEPEPAMAEKWSVSKDNKTYTFTIRENAKWTNGDPVTAGDFEYAWKRMLDPKKGASSAFLGYFIEGGEAYNSGKGKKDDVKVTAKDDRTLEVTLEAPQKYFLSVVSNPAYFPVNEKVDKDNPKWFAESDTFVGNGPFKLTEWKHDDSITMEKSDTYWDKDTVKLDKVKWAMVSDRNTDYQMFQSGELDTAYVPAELSDQLLDQDNVNIVDQAGLYFYRFNVNMEPFQNENIRKAFAMAVDQEEIVKYVTKNNEKPAHAFVSPGFTQPDGKDFREAGGDLIKPNESKAKQLLEKGMKEENYNKLPAITLTYSTKPEHKKIAEAIQQKLKNSLGVDVKLANMEWNVFLEDQKALKFQFSQSSFLPDYADPISFLEAFQTGNSMNRTGWANKEYDQLIKQAKNEADEKTRFSLMHQAEELLINEAPIIPVYFYNQVHLQNEQVKGIVRHPVGYIDLKWADKN.

The first 22 residues, M1–G22, serve as a signal peptide directing secretion. The N-palmitoyl cysteine moiety is linked to residue C23. C23 is lipidated: S-diacylglycerol cysteine.

This sequence belongs to the bacterial solute-binding protein 5 family.

The protein localises to the cell membrane. Functionally, probably part of the ABC transporter DppBCDE involved in dipeptide transport. The sequence is that of Dipeptide-binding protein DppE (dppE) from Bacillus subtilis (strain 168).